The chain runs to 93 residues: Sec-independent protein translocase protein TatA (93 aa).

The chain crosses the membrane as a helical span at residues 1-21 (MGIFDWKHWIVILVVVVLVFG). A disordered region spans residues 43–93 (MNDDEKPAEPVVPPAAQPVPPVQPQQSAPLNQPHTIDVQAQKVEEPTRKDS). The segment covering 52-65 (PVVPPAAQPVPPVQ) has biased composition (pro residues). The span at 84–93 (KVEEPTRKDS) shows a compositional bias: basic and acidic residues.

The protein belongs to the TatA/E family. The Tat system comprises two distinct complexes: a TatABC complex, containing multiple copies of TatA, TatB and TatC subunits, and a separate TatA complex, containing only TatA subunits. Substrates initially bind to the TatABC complex, which probably triggers association of the separate TatA complex to form the active translocon.

It is found in the cell inner membrane. In terms of biological role, part of the twin-arginine translocation (Tat) system that transports large folded proteins containing a characteristic twin-arginine motif in their signal peptide across membranes. TatA could form the protein-conducting channel of the Tat system. This chain is Sec-independent protein translocase protein TatA, found in Pseudomonas fluorescens (strain ATCC BAA-477 / NRRL B-23932 / Pf-5).